The chain runs to 526 residues: Choline/ethanolamine transporter FLVCR2 (526 aa).

Residues methionine 1–serine 70 are disordered. The Cytoplasmic portion of the chain corresponds to methionine 1–serine 76. Position 1–84 (methionine 1–arginine 84) interacts with heme b. 5 consecutive repeat copies span residues proline 25–histidine 30, proline 31–histidine 36, proline 37–asparagine 42, proline 43–histidine 48, and proline 49–histidine 54. The span at proline 25–serine 56 shows a compositional bias: low complexity. Residues proline 25–proline 72 form an 8 X 6 AA tandem repeats of P-S-[VS]-S-[VIAG]-[HNP] region. The stretch at proline 55 to glutamine 60 is one 6; approximate repeat. One copy of the 7; approximate repeat lies at proline 61–histidine 66. Copy 8 of the repeat occupies proline 67–proline 72. A helical transmembrane segment spans residues valine 77–glutamine 101. Residues asparagine 98 and tryptophan 102 each coordinate choline. At tryptophan 102–serine 119 the chain is on the extracellular side. Residues alanine 120–lysine 147 traverse the membrane as a helical segment. The Cytoplasmic segment spans residues phenylalanine 148–glycine 149. The chain crosses the membrane as a helical span at residues leucine 150 to leucine 169. Residues glycine 170–leucine 176 are Extracellular-facing. Residues phenylalanine 177–tryptophan 205 traverse the membrane as a helical segment. Choline-binding residues include glutamine 191 and leucine 195. The Cytoplasmic portion of the chain corresponds to phenylalanine 206–glutamate 210. A helical transmembrane segment spans residues valine 211–leucine 236. Over valine 237–glutamate 241 the chain is Extracellular. Residues aspartate 242–valine 271 form a helical membrane-spanning segment. Topologically, residues phenylalanine 272–asparagine 307 are cytoplasmic. Residues leucine 308–histidine 338 form a helical membrane-spanning segment. Tyrosine 325 is a choline binding site. Over tyrosine 339–glutamate 342 the chain is Extracellular. The chain crosses the membrane as a helical span at residues glutamate 343 to serine 371. The Cytoplasmic segment spans residues lysine 372–threonine 373. Residues tyrosine 374–leucine 396 traverse the membrane as a helical segment. Over asparagine 397–glycine 399 the chain is Extracellular. The helical transmembrane segment at histidine 400–leucine 429 threads the bilayer. Over threonine 430–isoleucine 437 the chain is Cytoplasmic. The helical transmembrane segment at serine 438–asparagine 463 threads the bilayer. Position 447 (glutamine 447) interacts with choline. Residues tyrosine 464–glycine 465 lie on the Extracellular side of the membrane. The helical transmembrane segment at threonine 466–lysine 488 threads the bilayer. At alanine 489–leucine 526 the chain is on the cytoplasmic side. A disordered region spans residues threonine 500 to leucine 526. Serine 515 carries the phosphoserine modification.

This sequence belongs to the major facilitator superfamily. Feline leukemia virus subgroup C receptor (TC 2.A.1.28.1) family. As to quaternary structure, interacts with components of electron transfer chain complexes III, IV and V including CYC1, NDUFA4, COX4I1, ATP5PD and ATP5F1C; these interactions occur in the absence of heme and are disrupted upon heme binding. Interacts with ATP2A2; this interaction occurs in the absence of heme and promotes ATP2A2 proteasomal degradation; the complex is dissociated upon heme binding. Interacts with HMOX1; this interaction is potentiated in the presence of heme. As to expression, expressed in non-hematopoietic tissues, with relative abundant expression in brain, placenta, lung, liver and kidney. Also expressed in hematopoietic tissues (fetal liver, spleen, lymph node, thymus, leukocytes and bone marrow). Found in acidophil cells of the pituitary that secrete growth hormone and prolactin (at protein level).

It is found in the cell membrane. The protein localises to the mitochondrion membrane. The protein resides in the endoplasmic reticulum membrane. It carries out the reaction choline(out) = choline(in). It catalyses the reaction ethanolamine(in) = ethanolamine(out). The catalysed reaction is heme b(in) = heme b(out). In terms of biological role, choline uniporter that specifically mediates choline uptake at the blood-brain-barrier. Responsible for the majority of choline uptake across the blood-brain-barrier from the circulation into the brain. Choline, a nutrient critical for brain development, is a precursor of phosphatidylcholine, as well as betaine. Also mediates transport of ethanolamine. Choline and ethanolamine transport is not coupled with proton transport and is exclusively driven by the choline gradient across the plasma membrane. However, the presence of an inwardly directed proton gradient enhances choline uptake. Also acts as a heme b transporter. Required to regulate mitochondrial respiration processes, ATP synthesis and thermogenesis. At low heme levels, interacts with components of electron transfer chain (ETC) complexes and ATP2A2, leading to ubiquitin-mediated degradation of ATP2A2 and inhibition of thermogenesis. Upon heme binding, dissociates from ETC complexes to allow switching from mitochondrial ATP synthesis to thermogenesis. This Homo sapiens (Human) protein is Choline/ethanolamine transporter FLVCR2.